Reading from the N-terminus, the 77-residue chain is U3-theraphotoxin-Hhn1k (77 aa).

The N-terminal stretch at 1 to 14 is a signal peptide; sequence TFAGLVLLFVVCYA. A propeptide spanning residues 15 to 42 is cleaved from the precursor; the sequence is SESEEKEFPKEMLSSIFAVDNDFKQEER. Intrachain disulfides connect Cys-44/Cys-57 and Cys-56/Cys-69.

Belongs to the neurotoxin 10 (Hwtx-1) family. 51 (Hntx-8) subfamily. Hntx-8 sub-subfamily. As to expression, expressed by the venom gland.

The protein localises to the secreted. In terms of biological role, ion channel inhibitor. In Cyriopagopus hainanus (Chinese bird spider), this protein is U3-theraphotoxin-Hhn1k.